The chain runs to 446 residues: N-succinylarginine dihydrolase (446 aa).

Residues 19–28, asparagine 110, and 137–138 contribute to the substrate site; these read AGLSFGNVAS and HR. Glutamate 174 is a catalytic residue. Arginine 213 contacts substrate. Histidine 249 is an active-site residue. Aspartate 251 and asparagine 364 together coordinate substrate. Cysteine 370 functions as the Nucleophile in the catalytic mechanism.

The protein belongs to the succinylarginine dihydrolase family. As to quaternary structure, homodimer.

It carries out the reaction N(2)-succinyl-L-arginine + 2 H2O + 2 H(+) = N(2)-succinyl-L-ornithine + 2 NH4(+) + CO2. It participates in amino-acid degradation; L-arginine degradation via AST pathway; L-glutamate and succinate from L-arginine: step 2/5. Functionally, catalyzes the hydrolysis of N(2)-succinylarginine into N(2)-succinylornithine, ammonia and CO(2). The protein is N-succinylarginine dihydrolase of Burkholderia pseudomallei (strain 668).